The following is a 541-amino-acid chain: Acyl-CoA ligase M9 (541 aa).

Residue 186 to 197 participates in AMP binding; that stretch reads AMSTSGTTGLPK. The tract at residues 445–519 is AMP-binding; it reads ELEAVLHQMP…DSLPRNSSGK (75 aa).

Belongs to the ATP-dependent AMP-binding enzyme family.

It participates in secondary metabolite biosynthesis. Functionally, acyl-CoA ligase; part of the gene cluster that mediates the biosynthesis of squalestatin S1 (SQS1, also known as zaragozic acid A), a heavily oxidized fungal polyketide that offers potent cholesterol lowering activity by targeting squalene synthase (SS). SQS1 is composed of a 2,8-dioxobicyclic[3.2.1]octane-3,4,5-tricarboxyclic acid core that is connected to two lipophilic polyketide arms. These initial steps feature the priming of an unusual benzoic acid starter unit onto the highly reducing polyketide synthase pks2, followed by oxaloacetate extension and product release to generate a tricarboxylic acid containing product. The phenylalanine ammonia lyase (PAL) M7 and the acyl-CoA ligase M9 are involved in transforming phenylalanine into benzoyl-CoA. The citrate synthase-like protein R3 is involved in connecting the C-alpha-carbons of the hexaketide chain and oxaloacetate to afford the tricarboxylic acid unit. The potential hydrolytic enzymes, M8 and M10, are in close proximity to pks2 and may participate in product release. On the other side, the tetraketide arm is synthesized by a the squalestatin tetraketide synthase pks1 and enzymatically esterified to the core in the last biosynthetic step, by the acetyltransferase M4. The biosynthesis of the tetraketide must involve 3 rounds of chain extension. After the first and second rounds methyl-transfer occurs, and in all rounds of extension the ketoreductase and dehydratase are active. The enoyl reductase and C-MeT of pks1 are not active in the final round of extension. The acetyltransferase M4 appears to have a broad substrate selectivity for its acyl CoA substrate, allowing the in vitro synthesis of novel squalestatins. The biosynthesis of SQS1 requires several oxidative steps likely performed by oxidoreductases M1, R1 and R2. Finally, in support of the identification of the cluster as being responsible for SQS1 production, the cluster contains a gene encoding a putative squalene synthase (SS) R6, suggesting a likely mechanism for self-resistance. The polypeptide is Acyl-CoA ligase M9 (Phoma sp. (strain ATCC 20986 / MF5453)).